Reading from the N-terminus, the 149-residue chain is 1,4-dihydroxy-2-naphthoyl-CoA hydrolase (149 aa).

The active site involves D19.

This sequence belongs to the 4-hydroxybenzoyl-CoA thioesterase family. DHNA-CoA hydrolase subfamily.

It carries out the reaction 1,4-dihydroxy-2-naphthoyl-CoA + H2O = 1,4-dihydroxy-2-naphthoate + CoA + H(+). It functions in the pathway cofactor biosynthesis; phylloquinone biosynthesis. The protein operates within quinol/quinone metabolism; 1,4-dihydroxy-2-naphthoate biosynthesis; 1,4-dihydroxy-2-naphthoate from chorismate: step 7/7. In terms of biological role, catalyzes the hydrolysis of 1,4-dihydroxy-2-naphthoyl-CoA (DHNA-CoA) to 1,4-dihydroxy-2-naphthoate (DHNA), a reaction involved in phylloquinone (vitamin K1) biosynthesis. The sequence is that of 1,4-dihydroxy-2-naphthoyl-CoA hydrolase from Synechococcus sp. (strain CC9902).